Here is a 392-residue protein sequence, read N- to C-terminus: L-rhamnonate dehydratase (392 aa).

The substrate site is built by histidine 22 and arginine 48. Aspartate 214, glutamate 240, and glutamate 268 together coordinate Mg(2+). Histidine 318 functions as the Proton acceptor in the catalytic mechanism. Glutamate 338 contacts substrate.

It belongs to the mandelate racemase/muconate lactonizing enzyme family. RhamD subfamily. As to quaternary structure, homooctamer; tetramer of dimers. Mg(2+) serves as cofactor.

It catalyses the reaction L-rhamnonate = 2-dehydro-3-deoxy-L-rhamnonate + H2O. Catalyzes the dehydration of L-rhamnonate to 2-keto-3-deoxy-L-rhamnonate (KDR). The protein is L-rhamnonate dehydratase of Paraburkholderia xenovorans (strain LB400).